The chain runs to 78 residues: UPF0154 protein lp_2061 (78 aa).

The chain crosses the membrane as a helical span at residues 5–27; that stretch reads TGIWILIVVIGVLVGLTGGFFGA.

This sequence belongs to the UPF0154 family.

It localises to the membrane. This chain is UPF0154 protein lp_2061, found in Lactiplantibacillus plantarum (strain ATCC BAA-793 / NCIMB 8826 / WCFS1) (Lactobacillus plantarum).